The chain runs to 129 residues: Small ribosomal subunit protein uS11 (129 aa).

It belongs to the universal ribosomal protein uS11 family. In terms of assembly, part of the 30S ribosomal subunit. Interacts with proteins S7 and S18. Binds to IF-3.

Its function is as follows. Located on the platform of the 30S subunit, it bridges several disparate RNA helices of the 16S rRNA. Forms part of the Shine-Dalgarno cleft in the 70S ribosome. The protein is Small ribosomal subunit protein uS11 of Methylobacterium sp. (strain 4-46).